A 600-amino-acid chain; its full sequence is Elongation factor 4 (600 aa).

Residues 4-186 (SKIRNFSIIA…AIVDKIPPPS (183 aa)) enclose the tr-type G domain. GTP contacts are provided by residues 16 to 21 (DHGKST) and 133 to 136 (NKID).

It belongs to the TRAFAC class translation factor GTPase superfamily. Classic translation factor GTPase family. LepA subfamily.

It localises to the cell membrane. It carries out the reaction GTP + H2O = GDP + phosphate + H(+). In terms of biological role, required for accurate and efficient protein synthesis under certain stress conditions. May act as a fidelity factor of the translation reaction, by catalyzing a one-codon backward translocation of tRNAs on improperly translocated ribosomes. Back-translocation proceeds from a post-translocation (POST) complex to a pre-translocation (PRE) complex, thus giving elongation factor G a second chance to translocate the tRNAs correctly. Binds to ribosomes in a GTP-dependent manner. The polypeptide is Elongation factor 4 (Mycoplasma capricolum subsp. capricolum (strain California kid / ATCC 27343 / NCTC 10154)).